Here is a 110-residue protein sequence, read N- to C-terminus: UPF0060 membrane protein Bcep18194_A4425 (110 aa).

A run of 4 helical transmembrane segments spans residues 9-29, 34-54, 66-86, and 88-108; these read ALFA…WLVL, PVWL…LLTL, YGGV…GVAL, and RWDV…ALQP.

It belongs to the UPF0060 family.

It is found in the cell inner membrane. The polypeptide is UPF0060 membrane protein Bcep18194_A4425 (Burkholderia lata (strain ATCC 17760 / DSM 23089 / LMG 22485 / NCIMB 9086 / R18194 / 383)).